Here is a 1043-residue protein sequence, read N- to C-terminus: MTTTKRLKFENLRIQFSNAIVGNFLRLPHSIINVLESTNYAIQEFGIAVHSHNSDIPIVHLGWDGHDSGSSENVVLINPVLATVYDLNQKSPLVDLYIQRYDHTHLATEVYVTPETSDDWEIIDANAMRFQNGEILHQTRIVTPGETLICYLEGIVTKFKIDRVEPSMKSARITDGSLVVVAPKVNKTRLVKAEYGHSNKTILKNGAIQLLKKVILRSTVCKMDFPKDNLFVVYISDGAQLPSQKGYASIVKCSLRQSKKSDSDNKSVGIPSKKIGVFIKCDSQIPENHIALSSHLWDAFFTHPMNGAKIKLEFLQMNQANIISGRNATVNIKYFGKDVPTKSGDQYSKLLGGSLLTNNLILPTEQIIIEIKKGESEQQLCNLNEISNESVQWKVTQMGKEEVKDIIERHLPKHYHVKETGEVSRTSKDEDDFITVNSIKKEMVNYLTSPIIATPAIILDGKQGIGKTRLLKELINEVEKDHHIFVKYADCETLHETSNLDKTQKLIMEWCSFCYWYGPSLIVLDNVEALFGKPQANDGDPSNNGQWDNASKLLNFFINQVTKIFNKDNKRIRVLFSGKQKTQINPLLFDKHFVSETWSLRAPDKHARAKLLEYFFSKNQIMKLNRDLQFSDLSLETEGFSPLDLEIFTEKIFYDLQLERDCDNVVTRELFSKSLSAFTPSALRGVKLTKETNIKWGDIGALANAKDVLLETLEWPTKYEPIFVNCPLRLRSGILLYGYPGCGKTLLASAVAQQCGLNFISVKGPEILNKFIGASEQNIRELFERAQSVKPCILFFDEFDSIAPKRGHDSTGVTDRVVNQLLTQMDGAEGLDGVYILAATSRPDLIDSALLRPGRLDKSVICNIPTESERLDILQAIVNSKDKDTGQKKFALEKNADLKLIAEKTAGFSGADLQGLCYNAYLKSVHRWLSAADQSEVVPGNDNIEYFSINEHGRREENRLRLKTLLQQDVVHETKTSTSAASELTAVVTINDLLEACQETKPSISTSELVKLRGIYDRFQKDRNGEMPNGENSIDIGSRLSLM.

An AAA-cassette D1 region spans residues 453-626; that stretch reads ATPAIILDGK…SKNQIMKLNR (174 aa). Residues 461-468 and 738-745 each bind ATP; these read GKQGIGKT and GYPGCGKT. The interval 733–926 is AAA-cassette D2; that stretch reads GILLYGYPGC…CYNAYLKSVH (194 aa).

It belongs to the AAA ATPase family. Interacts with PEX6; forming the PEX1-PEX6 AAA ATPase complex, which is composed of a heterohexamer formed by a trimer of PEX1-PEX6 dimers. The PEX1-PEX6 heterooligomers associate with the peroxisomal importomer via interaction of PEX6 with the peroxisomal membrane anchor PEX15.

Its subcellular location is the cytoplasm. It localises to the cytosol. The protein resides in the peroxisome membrane. The catalysed reaction is ATP + H2O = ADP + phosphate + H(+). Its function is as follows. Component of the PEX1-PEX6 AAA ATPase complex, a protein dislocase complex that mediates the ATP-dependent extraction of the PEX5 receptor from peroxisomal membranes, an essential step for PEX5 recycling. Specifically recognizes PEX5 monoubiquitinated at 'Cys-6', and pulls it out of the peroxisome lumen through the PEX2-PEX10-PEX12 retrotranslocation channel. Extraction by the PEX1-PEX6 AAA ATPase complex is accompanied by unfolding of the TPR repeats and release of bound cargo from PEX5. The polypeptide is Peroxisomal ATPase PEX1 (Saccharomyces cerevisiae (strain ATCC 204508 / S288c) (Baker's yeast)).